The chain runs to 167 residues: Claudin domain-containing protein 2 (167 aa).

4 consecutive transmembrane segments (helical) span residues 13–32 (LLNL…NYWT), 61–81 (VSAA…GIGI), 96–116 (TIVL…VYTS), and 130–150 (YFFG…FLLA).

The protein belongs to the PMP-22/EMP/MP20 family.

The protein resides in the membrane. The chain is Claudin domain-containing protein 2 (Cldnd2) from Mus musculus (Mouse).